Consider the following 391-residue polypeptide: UPF0229 protein BCG9842_B4751 (391 aa).

Polar residues predominate over residues 1-16 (MGEENQPNYTISQENW). Disordered stretches follow at residues 1-31 (MGEE…RHQE) and 80-117 (HVGQ…GDAA). Residues 21–31 (KGYDDQQRHQE) are compositionally biased toward basic and acidic residues. A compositionally biased stretch (gly residues) spans 98–115 (GSGGQKQKGPGKGQGAGD).

Belongs to the UPF0229 family.

The sequence is that of UPF0229 protein BCG9842_B4751 from Bacillus cereus (strain G9842).